Here is a 262-residue protein sequence, read N- to C-terminus: Small ribosomal subunit protein eS4 (262 aa).

One can recognise an S4 RNA-binding domain in the interval 42 to 104 (LPLLIFLRNR…TGEFFRLIYD (63 aa)).

The protein belongs to the eukaryotic ribosomal protein eS4 family.

The protein is Small ribosomal subunit protein eS4 (RpS4) of Lysiphlebus testaceipes (Greenbugs aphid parastoid).